The sequence spans 96 residues: Protein Vpr (96 aa).

Residues 1-42 (MEQAPEDQGPQREPYNEWTIEILEELKREAVRHFPRPWLHDL) form a homooligomerization region. 3 positions are modified to phosphoserine; by host: serine 79, serine 94, and serine 96.

This sequence belongs to the HIV-1 VPR protein family. In terms of assembly, homooligomer, may form homodimer. Interacts with p6-gag region of the Pr55 Gag precursor protein through a (Leu-X-X)4 motif near the C-terminus of the P6gag protein. Interacts with host UNG. May interact with host RAD23A/HHR23A. Interacts with host VPRBP/DCAF1, leading to hijack the CUL4A-RBX1-DDB1-DCAF1/VPRBP complex, mediating ubiquitination of host proteins such as TERT and ZGPAT and arrest of the cell cycle in G2 phase. Phosphorylated on several residues by host. These phosphorylations regulate VPR activity for the nuclear import of the HIV-1 pre-integration complex.

It is found in the virion. It localises to the host nucleus. Its subcellular location is the host extracellular space. Functionally, during virus replication, may deplete host UNG protein, and incude G2-M cell cycle arrest. Acts by targeting specific host proteins for degradation by the 26S proteasome, through association with the cellular CUL4A-DDB1 E3 ligase complex by direct interaction with host VPRPB/DCAF-1. Cell cycle arrest reportedly occurs within hours of infection and is not blocked by antiviral agents, suggesting that it is initiated by the VPR carried into the virion. Additionally, VPR induces apoptosis in a cell cycle dependent manner suggesting that these two effects are mechanistically linked. Detected in the serum and cerebrospinal fluid of AIDS patient, VPR may also induce cell death to bystander cells. Its function is as follows. During virus entry, plays a role in the transport of the viral pre-integration (PIC) complex to the host nucleus. This function is crucial for viral infection of non-dividing macrophages. May act directly at the nuclear pore complex, by binding nucleoporins phenylalanine-glycine (FG)-repeat regions. In Human immunodeficiency virus type 1 group M subtype K (isolate 97ZR-EQTB11) (HIV-1), this protein is Protein Vpr.